Here is a 234-residue protein sequence, read N- to C-terminus: Ribose-5-phosphate isomerase A (234 aa).

Substrate-binding positions include 39–42, 92–95, and 105–108; these read TGST, DGAD, and KGGG. The Proton acceptor role is filled by Glu-114. Lys-132 is a binding site for substrate.

Belongs to the ribose 5-phosphate isomerase family. As to quaternary structure, homodimer.

It catalyses the reaction aldehydo-D-ribose 5-phosphate = D-ribulose 5-phosphate. Its pathway is carbohydrate degradation; pentose phosphate pathway; D-ribose 5-phosphate from D-ribulose 5-phosphate (non-oxidative stage): step 1/1. Functionally, catalyzes the reversible conversion of ribose-5-phosphate to ribulose 5-phosphate. In Albidiferax ferrireducens (strain ATCC BAA-621 / DSM 15236 / T118) (Rhodoferax ferrireducens), this protein is Ribose-5-phosphate isomerase A.